A 174-amino-acid chain; its full sequence is Small ribosomal subunit protein uS5c (174 aa).

An S5 DRBM domain is found at W17–V80.

It belongs to the universal ribosomal protein uS5 family. As to quaternary structure, part of the 30S ribosomal subunit. Contacts protein S4.

Its subcellular location is the plastid. It localises to the chloroplast. Functionally, with S4 and S12 plays an important role in translational accuracy. This Pyropia yezoensis (Susabi-nori) protein is Small ribosomal subunit protein uS5c (rps5).